The chain runs to 294 residues: Beta-glucoside kinase (294 aa).

5-11 (AFDIGGT) contacts ATP.

The protein belongs to the ROK (NagC/XylR) family.

It catalyses the reaction D-cellobiose + ATP = 6-phospho-beta-D-glucosyl-(1-&gt;4)-D-glucose + ADP + H(+). Its function is as follows. Catalyzes the ATP-dependent phosphorylation of cellobiose to produce cellobiose-6'-P. May have a dual role of kinase and transcriptional regulator of the cellobiose-PTS operon. This Listeria monocytogenes serovar 1/2a (strain ATCC BAA-679 / EGD-e) protein is Beta-glucoside kinase (bglK).